The following is a 146-amino-acid chain: Ferric uptake regulation protein 2 (146 aa).

Residues Cys-96 and Cys-99 each contribute to the Zn(2+) site.

Belongs to the Fur family.

The protein resides in the cytoplasm. Its function is as follows. Acts as a global negative controlling element, employing Fe(2+) as a cofactor to bind the operator of the repressed genes. This is Ferric uptake regulation protein 2 (fur2) from Mycolicibacterium fortuitum (Mycobacterium fortuitum).